The primary structure comprises 185 residues: ATP synthase subunit b (185 aa).

Residues G27–G47 form a helical membrane-spanning segment.

Belongs to the ATPase B chain family. In terms of assembly, F-type ATPases have 2 components, F(1) - the catalytic core - and F(0) - the membrane proton channel. F(1) has five subunits: alpha(3), beta(3), gamma(1), delta(1), epsilon(1). F(0) has three main subunits: a(1), b(2) and c(10-14). The alpha and beta chains form an alternating ring which encloses part of the gamma chain. F(1) is attached to F(0) by a central stalk formed by the gamma and epsilon chains, while a peripheral stalk is formed by the delta and b chains.

It localises to the cell inner membrane. Its function is as follows. F(1)F(0) ATP synthase produces ATP from ADP in the presence of a proton or sodium gradient. F-type ATPases consist of two structural domains, F(1) containing the extramembraneous catalytic core and F(0) containing the membrane proton channel, linked together by a central stalk and a peripheral stalk. During catalysis, ATP synthesis in the catalytic domain of F(1) is coupled via a rotary mechanism of the central stalk subunits to proton translocation. In terms of biological role, component of the F(0) channel, it forms part of the peripheral stalk, linking F(1) to F(0). This chain is ATP synthase subunit b, found in Aquifex aeolicus (strain VF5).